The following is a 331-amino-acid chain: Putative peptidyl-prolyl cis-trans isomerase RF_0616 (331 aa).

Residues 28-50 are disordered; the sequence is NPTTIEQTASNNSSTDENQTSIN. Residues 128–226 form the PPIase FKBP-type domain; that stretch reads GHVVTVFYQI…NNEVKIYDDE (99 aa).

It catalyses the reaction [protein]-peptidylproline (omega=180) = [protein]-peptidylproline (omega=0). The protein is Putative peptidyl-prolyl cis-trans isomerase RF_0616 of Rickettsia felis (strain ATCC VR-1525 / URRWXCal2) (Rickettsia azadi).